A 202-amino-acid polypeptide reads, in one-letter code: Imidazoleglycerol-phosphate dehydratase (202 aa).

Belongs to the imidazoleglycerol-phosphate dehydratase family.

The protein resides in the cytoplasm. It carries out the reaction D-erythro-1-(imidazol-4-yl)glycerol 3-phosphate = 3-(imidazol-4-yl)-2-oxopropyl phosphate + H2O. The protein operates within amino-acid biosynthesis; L-histidine biosynthesis; L-histidine from 5-phospho-alpha-D-ribose 1-diphosphate: step 6/9. This Acinetobacter baylyi (strain ATCC 33305 / BD413 / ADP1) protein is Imidazoleglycerol-phosphate dehydratase.